We begin with the raw amino-acid sequence, 355 residues long: MRPSLAELSVDDLASVLAQWGYKRSHAGRVLREYYARCGELTEAGRPWPAGLLERLRIEFAPGGTALAARQVAADGTTKLLLRLADGRTVEAVLMPDYRADRAAGCLSSQVGCAMGCDFCATAQSGFERNLTAGEMVEQFLALRREAASAGRKLQTVVFMGMGEPLLNLDAVLTAVRRIADNTYGGLGWRQVTVSTVGLVPGIDALTAADLGINLAVSLHAPDDATRAALLPAGRRFAIADILAAVDRFQASRGRPVIIQYCLLKGVNDSAAHARMLAAVIGSRRMHVNLLHYNPTGLSLRGVRYEPSGDEAAAQFLAELRARGVVTHLRRSRGPDIDAACGQLRAKRGELSVQS.

E91 acts as the Proton acceptor in catalysis. The 238-residue stretch at 99–336 (RADRAAGCLS…THLRRSRGPD (238 aa)) folds into the Radical SAM core domain. A disulfide bond links C106 and C341. Residues C113, C117, and C120 each coordinate [4Fe-4S] cluster. S-adenosyl-L-methionine-binding positions include 163-164 (GE), S195, 218-220 (SLH), and N294. C341 (S-methylcysteine intermediate) is an active-site residue.

This sequence belongs to the radical SAM superfamily. RlmN family. [4Fe-4S] cluster serves as cofactor.

Its subcellular location is the cytoplasm. The enzyme catalyses adenosine(2503) in 23S rRNA + 2 reduced [2Fe-2S]-[ferredoxin] + 2 S-adenosyl-L-methionine = 2-methyladenosine(2503) in 23S rRNA + 5'-deoxyadenosine + L-methionine + 2 oxidized [2Fe-2S]-[ferredoxin] + S-adenosyl-L-homocysteine. It carries out the reaction adenosine(37) in tRNA + 2 reduced [2Fe-2S]-[ferredoxin] + 2 S-adenosyl-L-methionine = 2-methyladenosine(37) in tRNA + 5'-deoxyadenosine + L-methionine + 2 oxidized [2Fe-2S]-[ferredoxin] + S-adenosyl-L-homocysteine. Functionally, specifically methylates position 2 of adenine 2503 in 23S rRNA and position 2 of adenine 37 in tRNAs. The chain is Probable dual-specificity RNA methyltransferase RlmN 1 from Opitutus terrae (strain DSM 11246 / JCM 15787 / PB90-1).